Consider the following 365-residue polypeptide: Chorismate synthase (365 aa).

Arg-47 is a binding site for NADP(+). FMN is bound by residues 124-126 (RAS), Gly-287, 302-306 (KPTAT), and Arg-328.

This sequence belongs to the chorismate synthase family. Homotetramer. It depends on FMNH2 as a cofactor.

The enzyme catalyses 5-O-(1-carboxyvinyl)-3-phosphoshikimate = chorismate + phosphate. It functions in the pathway metabolic intermediate biosynthesis; chorismate biosynthesis; chorismate from D-erythrose 4-phosphate and phosphoenolpyruvate: step 7/7. Functionally, catalyzes the anti-1,4-elimination of the C-3 phosphate and the C-6 proR hydrogen from 5-enolpyruvylshikimate-3-phosphate (EPSP) to yield chorismate, which is the branch point compound that serves as the starting substrate for the three terminal pathways of aromatic amino acid biosynthesis. This reaction introduces a second double bond into the aromatic ring system. This Prochlorococcus marinus (strain MIT 9215) protein is Chorismate synthase.